The primary structure comprises 391 residues: NADH-quinone oxidoreductase subunit D (391 aa).

This sequence belongs to the complex I 49 kDa subunit family. In terms of assembly, NDH-1 is composed of 14 different subunits. Subunits NuoB, C, D, E, F, and G constitute the peripheral sector of the complex.

The protein localises to the cell inner membrane. It carries out the reaction a quinone + NADH + 5 H(+)(in) = a quinol + NAD(+) + 4 H(+)(out). In terms of biological role, NDH-1 shuttles electrons from NADH, via FMN and iron-sulfur (Fe-S) centers, to quinones in the respiratory chain. The immediate electron acceptor for the enzyme in this species is believed to be ubiquinone. Couples the redox reaction to proton translocation (for every two electrons transferred, four hydrogen ions are translocated across the cytoplasmic membrane), and thus conserves the redox energy in a proton gradient. The sequence is that of NADH-quinone oxidoreductase subunit D from Rickettsia bellii (strain OSU 85-389).